The following is a 369-amino-acid chain: Molybdenum import ATP-binding protein ModC (369 aa).

The ABC transporter domain maps to 3–246 (TRPEQASKDT…LDLPLAHGDS (244 aa)). Residue 44-51 (GPSGSGKT) coordinates ATP. One can recognise a Mop domain in the interval 305–369 (DTSILNILPA…AQIKGVAILG (65 aa)).

Belongs to the ABC transporter superfamily. Molybdate importer (TC 3.A.1.8) family. The complex is composed of two ATP-binding proteins (ModC), two transmembrane proteins (ModB) and a solute-binding protein (ModA).

The protein localises to the cell inner membrane. The enzyme catalyses molybdate(out) + ATP + H2O = molybdate(in) + ADP + phosphate + H(+). Its function is as follows. Part of the ABC transporter complex ModABC involved in molybdenum import. Responsible for energy coupling to the transport system. The polypeptide is Molybdenum import ATP-binding protein ModC (Albidiferax ferrireducens (strain ATCC BAA-621 / DSM 15236 / T118) (Rhodoferax ferrireducens)).